We begin with the raw amino-acid sequence, 537 residues long: Chaperonin GroEL 1 (537 aa).

Residues 29-32, 86-90, Gly-413, and Asp-494 contribute to the ATP site; these read TLGP and DGTTT.

This sequence belongs to the chaperonin (HSP60) family. In terms of assembly, forms a cylinder of 14 subunits composed of two heptameric rings stacked back-to-back. Interacts with the co-chaperonin GroES.

The protein resides in the cytoplasm. It carries out the reaction ATP + H2O + a folded polypeptide = ADP + phosphate + an unfolded polypeptide.. Functionally, together with its co-chaperonin GroES, plays an essential role in assisting protein folding. The GroEL-GroES system forms a nano-cage that allows encapsulation of the non-native substrate proteins and provides a physical environment optimized to promote and accelerate protein folding. This Mycobacterium leprae (strain TN) protein is Chaperonin GroEL 1.